Reading from the N-terminus, the 412-residue chain is MKAARFAMHSARSLSSVGLVPREVELFSRYSPSPLSMKQLLDFGSDNACERTSFSFLRQELPVRLANILKEIDVLPDRLTNTSSVQLVKSWYIQSLMELVEFHEKSPEDQKNLSDFVDTLIKVRNRHHNVVPTMAQGILEYKDTCTVDPVTNQSLQYFLDRFYMNRISTRMLMNQHILIFSDSQTGNPSHIGSIDPKCDVVAVIQDAFESSKMLCDQYYLTSPELKLTQVNGKFPGQPIHIVYVPSHLHHMLFELFKNAMRATVERQESWPSLTPVEVIVVLGKEDLTIKISDRGGGVPLRITDRLFSYMYSTAPTPVMDNSRNAPLAGFGYGLPISRLYAKYFQGDLNLYSLSGYGTDAIIYLKALSSESVEKLPVFNKSAFKHYQMSSEADDWCIPSREPRNLSKEKMAM.

The Histidine kinase domain maps to 138–368 (ILEYKDTCTV…DAIIYLKALS (231 aa)). Residues 254–261 (ELFKNAMR), D293, 312–313 (ST), and 329–334 (GFGYGL) contribute to the ATP site.

Belongs to the PDK/BCKDK protein kinase family. In terms of assembly, homodimer. Interacts with the pyruvate dehydrogenase complex subunit DLAT, and is part of the multimeric pyruvate dehydrogenase complex that contains multiple copies of pyruvate dehydrogenase (E1), dihydrolipoamide acetyltransferase (DLAT, E2) and lipoamide dehydrogenase (DLD, E3). Detected in skeletal muscle and heart.

It is found in the mitochondrion matrix. The catalysed reaction is L-seryl-[pyruvate dehydrogenase E1 alpha subunit] + ATP = O-phospho-L-seryl-[pyruvate dehydrogenase E1 alpha subunit] + ADP + H(+). Its function is as follows. Kinase that plays a key role in regulation of glucose and fatty acid metabolism and homeostasis via phosphorylation of the pyruvate dehydrogenase subunits PDHA1 and PDHA2. This inhibits pyruvate dehydrogenase activity, and thereby regulates metabolite flux through the tricarboxylic acid cycle, down-regulates aerobic respiration and inhibits the formation of acetyl-coenzyme A from pyruvate. Inhibition of pyruvate dehydrogenase decreases glucose utilization and increases fat metabolism in response to prolonged fasting and starvation. Plays an important role in maintaining normal blood glucose levels under starvation, and is involved in the insulin signaling cascade. Via its regulation of pyruvate dehydrogenase activity, plays an important role in maintaining normal blood pH and in preventing the accumulation of ketone bodies under starvation. In the fed state, mediates cellular responses to glucose levels and to a high-fat diet. Regulates both fatty acid oxidation and de novo fatty acid biosynthesis. Plays a role in the generation of reactive oxygen species. Protects detached epithelial cells against anoikis. Plays a role in cell proliferation via its role in regulating carbohydrate and fatty acid metabolism. The protein is [Pyruvate dehydrogenase (acetyl-transferring)] kinase isozyme 4, mitochondrial (PDK4) of Ictidomys tridecemlineatus (Thirteen-lined ground squirrel).